Reading from the N-terminus, the 309-residue chain is Homoserine O-succinyltransferase (309 aa).

Residue cysteine 142 is the Acyl-thioester intermediate of the active site. 2 residues coordinate substrate: lysine 163 and serine 192. The Proton acceptor role is filled by histidine 235. Residue glutamate 237 is part of the active site. Residue arginine 249 participates in substrate binding.

The protein belongs to the MetA family. Homodimer.

It is found in the cytoplasm. It catalyses the reaction L-homoserine + succinyl-CoA = O-succinyl-L-homoserine + CoA. It participates in amino-acid biosynthesis; L-methionine biosynthesis via de novo pathway; O-succinyl-L-homoserine from L-homoserine: step 1/1. Its function is as follows. Transfers a succinyl group from succinyl-CoA to L-homoserine, forming succinyl-L-homoserine. The protein is Homoserine O-succinyltransferase of Escherichia coli O17:K52:H18 (strain UMN026 / ExPEC).